A 243-amino-acid polypeptide reads, in one-letter code: Uridylate kinase (243 aa).

Residue 14–17 coordinates ATP; sequence KLSG. Gly-57 provides a ligand contact to UMP. Positions 58 and 62 each coordinate ATP. UMP-binding positions include Asp-77 and 139–146; that span reads TGRPYFTT. ATP-binding residues include Asn-167, Tyr-173, and Asp-176.

Belongs to the UMP kinase family. Homohexamer.

It is found in the cytoplasm. It carries out the reaction UMP + ATP = UDP + ADP. It functions in the pathway pyrimidine metabolism; CTP biosynthesis via de novo pathway; UDP from UMP (UMPK route): step 1/1. Inhibited by UTP. In terms of biological role, catalyzes the reversible phosphorylation of UMP to UDP. This is Uridylate kinase from Mycoplasmopsis pulmonis (strain UAB CTIP) (Mycoplasma pulmonis).